The primary structure comprises 440 residues: Glycerophosphocholine cholinephosphodiesterase ENPP6 (440 aa).

Residues 1–22 (MAVKLGTLLLALALGLAQPASA) form the signal peptide. 3 residues coordinate substrate: D32, S71, and N92. The Zn(2+) site is built by D32 and S71. The Nucleophile role is filled by S71. At S71 the chain carries Phosphoserine. 2 N-linked (GlcNAc...) asparagine glycosylation sites follow: N100 and N118. Residues C142 and C154 are joined by a disulfide bond. D193 contacts substrate. Residues D193, H197, D240, and H241 each contribute to the Zn(2+) site. Substrate is bound at residue H241. An N-linked (GlcNAc...) asparagine glycan is attached at N341. H354 contacts substrate. H354 lines the Zn(2+) pocket. An N-linked (GlcNAc...) asparagine glycan is attached at N404. A lipid anchor (GPI-anchor amidated serine) is attached at S419. A propeptide spans 420–440 (TAPPVWPSHCALALILLFLLA) (removed in mature form).

Belongs to the nucleotide pyrophosphatase/phosphodiesterase family. Homodimer; disulfide-linked. Homotetramer. It depends on Zn(2+) as a cofactor. Predominantly expressed in kidney and brain. In the kidney, expressed specifically in the proximal tubules and thin descending limbs of Henle (at protein level).

It localises to the cell membrane. The catalysed reaction is sn-glycerol 3-phosphocholine + H2O = phosphocholine + glycerol + H(+). It catalyses the reaction a 1-acyl-sn-glycero-3-phosphocholine + H2O = a 1-acyl-sn-glycerol + phosphocholine + H(+). It carries out the reaction a 1-O-alkyl-sn-glycero-3-phosphocholine + H2O = a 1-O-alkyl-sn-glycerol + phosphocholine + H(+). The enzyme catalyses 1-dodecanoyl-sn-glycero-3-phosphocholine + H2O = 1-dodecanoyl-sn-glycerol + phosphocholine + H(+). The catalysed reaction is 1-hexadecanoyl-sn-glycero-3-phosphocholine + H2O = 1-hexadecanoyl-sn-glycerol + phosphocholine + H(+). It catalyses the reaction 1-(5Z,8Z,11Z,14Z-eicosatetraenoyl)-sn-glycero-3-phosphocholine + H2O = 1-(5Z,8Z,11Z,14Z-eicosatetraenoyl)-sn-glycerol + phosphocholine + H(+). It carries out the reaction 1-tetradecanoyl-sn-glycero-3-phosphocholine + H2O = 1-tetradecanoyl-sn-glycerol + phosphocholine + H(+). The enzyme catalyses sphing-4-enine-phosphocholine + H2O = sphing-4-enine + phosphocholine + H(+). The catalysed reaction is 1-(9Z-octadecenoyl)-sn-glycero-3-phosphocholine + H2O = 1-(9Z-octadecenoyl)-sn-glycerol + phosphocholine + H(+). It catalyses the reaction 1-(9Z,12Z)-octadecadienoyl-sn-glycero-3-phosphocholine + H2O = 1-(9Z,12Z-octadecadienoyl)-sn-glycerol + phosphocholine + H(+). It carries out the reaction glycero-2-phosphocholine + H2O = phosphocholine + glycerol + H(+). Its activity is regulated as follows. Inhibited by EDTA and EGTA in vitro. Functionally, choline-specific glycerophosphodiesterase that hydrolyzes glycerophosphocholine (GPC) and lysophosphatidylcholine (LPC) and contributes to supplying choline to the cells. Has a preference for LPC with short (12:0 and 14:0) or polyunsaturated (18:2 and 20:4) fatty acids. In vitro, hydrolyzes only choline-containing lysophospholipids, such as sphingosylphosphorylcholine (SPC), platelet-activating factor (PAF) and lysoPAF, but not other lysophospholipids. The chain is Glycerophosphocholine cholinephosphodiesterase ENPP6 from Homo sapiens (Human).